The chain runs to 159 residues: RNA pyrophosphohydrolase (159 aa).

The region spanning 6–149 (GFRPNVGIIL…KREVYRRALK (144 aa)) is the Nudix hydrolase domain. The Nudix box signature appears at 38–59 (GGINDRESPEEALYRELNEEVG).

It belongs to the Nudix hydrolase family. RppH subfamily. A divalent metal cation serves as cofactor.

In terms of biological role, accelerates the degradation of transcripts by removing pyrophosphate from the 5'-end of triphosphorylated RNA, leading to a more labile monophosphorylated state that can stimulate subsequent ribonuclease cleavage. The sequence is that of RNA pyrophosphohydrolase from Ectopseudomonas mendocina (strain ymp) (Pseudomonas mendocina).